The chain runs to 339 residues: AB hydrolase superfamily protein B1A11.02 (339 aa).

The protein belongs to the AB hydrolase superfamily.

This is AB hydrolase superfamily protein B1A11.02 from Schizosaccharomyces pombe (strain 972 / ATCC 24843) (Fission yeast).